The following is a 1148-amino-acid chain: Ice nucleation protein (1148 aa).

3 disordered regions span residues Ala110–Ile131, Tyr222–Ser256, and Gly367–Leu394. Low complexity predominate over residues Ser114–Pro128. The interval Ala180–Ile1099 is octapeptide periodicity. Residues Glu230–Leu250 show a composition bias toward polar residues.

It belongs to the bacterial ice nucleation protein family.

The protein resides in the cell outer membrane. Functionally, ice nucleation proteins enable bacteria to nucleate crystallization in supercooled water. The sequence is that of Ice nucleation protein (inaK) from Pseudomonas syringae.